We begin with the raw amino-acid sequence, 322 residues long: Lipoyl synthase (322 aa).

Cys66, Cys71, Cys77, Cys92, Cys96, Cys99, and Ser306 together coordinate [4Fe-4S] cluster. The 218-residue stretch at 78-295 folds into the Radical SAM core domain; it reads FSKGTATFMI…EKEAYELGFS (218 aa).

This sequence belongs to the radical SAM superfamily. Lipoyl synthase family. [4Fe-4S] cluster serves as cofactor.

It localises to the cytoplasm. It carries out the reaction [[Fe-S] cluster scaffold protein carrying a second [4Fe-4S](2+) cluster] + N(6)-octanoyl-L-lysyl-[protein] + 2 oxidized [2Fe-2S]-[ferredoxin] + 2 S-adenosyl-L-methionine + 4 H(+) = [[Fe-S] cluster scaffold protein] + N(6)-[(R)-dihydrolipoyl]-L-lysyl-[protein] + 4 Fe(3+) + 2 hydrogen sulfide + 2 5'-deoxyadenosine + 2 L-methionine + 2 reduced [2Fe-2S]-[ferredoxin]. It functions in the pathway protein modification; protein lipoylation via endogenous pathway; protein N(6)-(lipoyl)lysine from octanoyl-[acyl-carrier-protein]: step 2/2. In terms of biological role, catalyzes the radical-mediated insertion of two sulfur atoms into the C-6 and C-8 positions of the octanoyl moiety bound to the lipoyl domains of lipoate-dependent enzymes, thereby converting the octanoylated domains into lipoylated derivatives. This chain is Lipoyl synthase, found in Neisseria meningitidis serogroup C (strain 053442).